The primary structure comprises 336 residues: MTTNRKDEHILYALEQKSSYNSFDEVELIHSSLPLYNLDEIDLSTEFAGRKWDFPFYINAMTGGSNKGREINQKLAQVAESCGILFVTGSYSAALKNPTDDSFSVKSSHPNLLLGTNIGLDKPVELGLQTVEEMNPVLLQVHVNVMQELLMPEGERKFRSWQSHLADYSKQIPVPIVLKEVGFGMDAKTIERAYEFGVRTVDLSGRGGTSFAYIENRRSGQRDYLNQWGQSTMQALLNAQEWKDKVELLVSGGVRNPLDMIKCLVFGAKAVGLSRTVLELVETYTVEEVIGIVQGWKADLRLIMCSLNCATIADLQKVDYLLYGKLKEANDQMKKA.

5–6 contacts substrate; the sequence is RK. Residues 60-62, Ser90, and Asn117 contribute to the FMN site; that span reads AMT. Gln147 provides a ligand contact to substrate. Glu148 serves as a coordination point for Mg(2+). FMN is bound by residues Lys179, Ser204, Thr209, 253–255, and 274–275; these read GVR and SR.

The protein belongs to the IPP isomerase type 2 family. In terms of assembly, homooctamer. Dimer of tetramers. FMN is required as a cofactor. Requires NADPH as cofactor. The cofactor is Mg(2+).

Its subcellular location is the cytoplasm. It catalyses the reaction isopentenyl diphosphate = dimethylallyl diphosphate. Involved in the biosynthesis of isoprenoids. Catalyzes the 1,3-allylic rearrangement of the homoallylic substrate isopentenyl (IPP) to its allylic isomer, dimethylallyl diphosphate (DMAPP). This chain is Isopentenyl-diphosphate delta-isomerase, found in Streptococcus pneumoniae (strain 70585).